Consider the following 187-residue polypeptide: BCL2/adenovirus E1B 19 kDa protein-interacting protein 3 (187 aa).

A disordered region spans residues 42–86 (LDAQHESGRSSSKSSHCDSPPRSQTPQDTNRAEIDSHSFGEKNST). 6 positions are modified to phosphoserine: Ser48, Ser60, Ser77, Ser79, Ser85, and Ser88. Over residues 50–63 (RSSSKSSHCDSPPR) the composition is skewed to low complexity. The span at 71–81 (NRAEIDSHSFG) shows a compositional bias: basic and acidic residues. Residues 93 to 118 (IERRREVESILKKNSDWIWDWSSRPE) carry the BH3 motif. The helical transmembrane segment at 157–177 (VFLPSLLLSHLLAIGLGIYIG) threads the bilayer.

It belongs to the NIP3 family. Homodimer. Binds to BCL2. Interacts with BNIP3L and ACAA2. Interacts (via BH3 domain) with SPATA18 (via coiled-coil domains). Interacts with BOK; promotes BOK oligomerization. Interacts with PPTC7; this interaction promotes BNIP3 degradation.

The protein localises to the mitochondrion. It localises to the mitochondrion outer membrane. In terms of biological role, apoptosis-inducing protein that can overcome BCL2 suppression. May play a role in repartitioning calcium between the two major intracellular calcium stores in association with BCL2. Involved in mitochondrial quality control via its interaction with SPATA18/MIEAP: in response to mitochondrial damage, participates in mitochondrial protein catabolic process (also named MALM) leading to the degradation of damaged proteins inside mitochondria. The physical interaction of SPATA18/MIEAP, BNIP3 and BNIP3L/NIX at the mitochondrial outer membrane may play a critical role in the translocation of lysosomal proteins from the cytoplasm to the mitochondrial matrix. The physical interaction of SPATA18/MIEAP, BNIP3 and BNIP3L/NIX at the mitochondrial outer membrane regulates the opening of a pore in the mitochondrial double membrane in order to mediate the translocation of lysosomal proteins from the cytoplasm to the mitochondrial matrix. Plays an important role in the calprotectin (S100A8/A9)-induced cell death pathway. The sequence is that of BCL2/adenovirus E1B 19 kDa protein-interacting protein 3 from Mus musculus (Mouse).